A 235-amino-acid polypeptide reads, in one-letter code: NAD(P)H-hydrate epimerase (235 aa).

Positions 12–218 (AIVMDQLLMG…EFLKETNLTI (207 aa)) constitute a YjeF N-terminal domain. A (6S)-NADPHX-binding site is contributed by 62 to 66 (NNGGD). The K(+) site is built by asparagine 63 and aspartate 127. Residues 131–137 (GYSFKGD) and aspartate 161 contribute to the (6S)-NADPHX site. Serine 164 lines the K(+) pocket.

The protein belongs to the NnrE/AIBP family. The cofactor is K(+).

It catalyses the reaction (6R)-NADHX = (6S)-NADHX. The enzyme catalyses (6R)-NADPHX = (6S)-NADPHX. In terms of biological role, catalyzes the epimerization of the S- and R-forms of NAD(P)HX, a damaged form of NAD(P)H that is a result of enzymatic or heat-dependent hydration. This is a prerequisite for the S-specific NAD(P)H-hydrate dehydratase to allow the repair of both epimers of NAD(P)HX. The polypeptide is NAD(P)H-hydrate epimerase (Dictyostelium discoideum (Social amoeba)).